Here is a 475-residue protein sequence, read N- to C-terminus: Peroxisome proliferator-activated receptor gamma (475 aa).

O-linked (GlcNAc) threonine glycosylation is present at Thr54. Ser82 carries the phosphoserine; by MAPK modification. A DNA-binding region (nuclear receptor) is located at residues Ala106–Phe180. 2 consecutive NR C4-type zinc fingers follow at residues Cys109 to Cys129 and Cys146 to Cys168. Residues His175–Met250 are interaction with FAM120B. Positions Asp208–Asp473 constitute an NR LBD domain. Lys222 is covalently cross-linked (Glycyl lysine isopeptide (Lys-Gly) (interchain with G-Cter in ubiquitin)). The 9aaTAD motif lies at Pro465 to Asp473.

It belongs to the nuclear hormone receptor family. NR1 subfamily. Interacts with FOXO1 (acetylated form). Heterodimer with other nuclear receptors, such as RXRA. The heterodimer with the retinoic acid receptor RXRA is called adipocyte-specific transcription factor ARF6. Interacts with NCOA6 coactivator, leading to a strong increase in transcription of target genes. Interacts with coactivator PPARBP, leading to a mild increase in transcription of target genes. Interacts with NOCA7 in a ligand-inducible manner. Interacts with NCOA1 and NCOA2 LXXLL motifs. Interacts with ASXL1, ASXL2, DNTTIP2, FAM120B, MAP2K1/MEK1, NR0B2, PDPK1, PRDM16, PRMT2 and TGFB1I1. Interacts (when activated by agonist) with PPP5C. Interacts with HELZ2 and THRAP3; the interaction stimulates the transcriptional activity of PPARG. Interacts with PER2, the interaction is ligand dependent and blocks PPARG recruitment to target promoters. Interacts with NOCT. Interacts with ACTN4. Interacts (when in the liganded conformation) with GPS2. Interacts with CRY1 and CRY2 in a ligand-dependent manner. In the absence of hormonal ligand, interacts with TACC1. In macrophages, interacts with PAQR3 and STUB1; the interactions promote PPARG poylubiquitination and STUB1-mediated degradation. Post-translationally, O-GlcNAcylation at Thr-54 reduces transcriptional activity in adipocytes. In terms of processing, phosphorylated at basal conditions and dephosphorylated when treated with the ligand. May be dephosphorylated by PPP5C. The phosphorylated form may be inactive and dephosphorylation induces adipogenic activity. Ubiquitinated by E3 ubiquitin-protein ligase complex containing FBXO9; leading to proteasomal degradation. Ubiquitinated at Lys-222 by TRIM55 leading to proteasomal degradation. Ubiquitinated by E3 ubiquitin-protein ligase STUB1/CHIP; leading to proteasomal degradation.

Its subcellular location is the nucleus. The protein resides in the cytoplasm. Its activity is regulated as follows. PDPK1 activates its transcriptional activity independently of its kinase activity. Interacts with HELZ2 and THRAP3; the interaction enhances the transcriptional activity of PPARG. Nuclear receptor that binds peroxisome proliferators such as hypolipidemic drugs and fatty acids. Once activated by a ligand, the nuclear receptor binds to DNA specific PPAR response elements (PPRE) and modulates the transcription of its target genes, such as acyl-CoA oxidase. It therefore controls the peroxisomal beta-oxidation pathway of fatty acids. Key regulator of adipocyte differentiation and glucose homeostasis. ARF6 acts as a key regulator of the tissue-specific adipocyte P2 (aP2) enhancer. Acts as a critical regulator of gut homeostasis by suppressing NF-kappa-B-mediated pro-inflammatory responses. Plays a role in the regulation of cardiovascular circadian rhythms by regulating the transcription of BMAL1 in the blood vessels. This is Peroxisome proliferator-activated receptor gamma (PPARG) from Cricetulus griseus (Chinese hamster).